The sequence spans 481 residues: 3-isopropylmalate dehydratase large subunit (481 aa).

Residues Cys357, Cys417, and Cys420 each coordinate [4Fe-4S] cluster. Residues 429-441 (SPGQRCASTSNRN) are compositionally biased toward polar residues. Residues 429–451 (SPGQRCASTSNRNFEGRQGKGGR) are disordered.

The protein belongs to the aconitase/IPM isomerase family. LeuC type 1 subfamily. Heterodimer of LeuC and LeuD. [4Fe-4S] cluster serves as cofactor.

It catalyses the reaction (2R,3S)-3-isopropylmalate = (2S)-2-isopropylmalate. The protein operates within amino-acid biosynthesis; L-leucine biosynthesis; L-leucine from 3-methyl-2-oxobutanoate: step 2/4. Catalyzes the isomerization between 2-isopropylmalate and 3-isopropylmalate, via the formation of 2-isopropylmaleate. This chain is 3-isopropylmalate dehydratase large subunit, found in Mycobacterium sp. (strain KMS).